A 321-amino-acid polypeptide reads, in one-letter code: Acetyl-coenzyme A carboxylase carboxyl transferase subunit alpha (321 aa).

The CoA carboxyltransferase C-terminal domain maps to 39 to 293 (RLQQKSQTLA…RRALGDSLRQ (255 aa)).

Belongs to the AccA family. As to quaternary structure, acetyl-CoA carboxylase is a heterohexamer composed of biotin carboxyl carrier protein (AccB), biotin carboxylase (AccC) and two subunits each of ACCase subunit alpha (AccA) and ACCase subunit beta (AccD).

It is found in the cytoplasm. It catalyses the reaction N(6)-carboxybiotinyl-L-lysyl-[protein] + acetyl-CoA = N(6)-biotinyl-L-lysyl-[protein] + malonyl-CoA. The protein operates within lipid metabolism; malonyl-CoA biosynthesis; malonyl-CoA from acetyl-CoA: step 1/1. Functionally, component of the acetyl coenzyme A carboxylase (ACC) complex. First, biotin carboxylase catalyzes the carboxylation of biotin on its carrier protein (BCCP) and then the CO(2) group is transferred by the carboxyltransferase to acetyl-CoA to form malonyl-CoA. The sequence is that of Acetyl-coenzyme A carboxylase carboxyl transferase subunit alpha from Bordetella avium (strain 197N).